The primary structure comprises 190 residues: Crossover junction endodeoxyribonuclease RuvC (190 aa).

Residues D8, E67, and D139 contribute to the active site. Mg(2+) is bound by residues D8, E67, and D139.

This sequence belongs to the RuvC family. In terms of assembly, homodimer which binds Holliday junction (HJ) DNA. The HJ becomes 2-fold symmetrical on binding to RuvC with unstacked arms; it has a different conformation from HJ DNA in complex with RuvA. In the full resolvosome a probable DNA-RuvA(4)-RuvB(12)-RuvC(2) complex forms which resolves the HJ. It depends on Mg(2+) as a cofactor.

The protein localises to the cytoplasm. The enzyme catalyses Endonucleolytic cleavage at a junction such as a reciprocal single-stranded crossover between two homologous DNA duplexes (Holliday junction).. Its function is as follows. The RuvA-RuvB-RuvC complex processes Holliday junction (HJ) DNA during genetic recombination and DNA repair. Endonuclease that resolves HJ intermediates. Cleaves cruciform DNA by making single-stranded nicks across the HJ at symmetrical positions within the homologous arms, yielding a 5'-phosphate and a 3'-hydroxyl group; requires a central core of homology in the junction. The consensus cleavage sequence is 5'-(A/T)TT(C/G)-3'. Cleavage occurs on the 3'-side of the TT dinucleotide at the point of strand exchange. HJ branch migration catalyzed by RuvA-RuvB allows RuvC to scan DNA until it finds its consensus sequence, where it cleaves and resolves the cruciform DNA. This is Crossover junction endodeoxyribonuclease RuvC from Haemophilus influenzae (strain 86-028NP).